The primary structure comprises 212 residues: MSERSVSKQKSSDRWYSIIAPEQFDRSELGSTFADDPEKIHGRTLEVTLGDITGDQGENNTKLTFKVNDVTSDAAYTEFIKHELARDYLRSLIRRGASKIDAAITVRTTDDYRVQLQPVAFTTKKADRSQEQAIRRVMIDLVEDAADERTFADLIDAAIEGQLSSAIYGEAKTIYPLRRVEVKKLTLEARPEEVAAEEAAAVDVDEADVAVE.

Belongs to the eukaryotic ribosomal protein eS1 family.

The chain is Small ribosomal subunit protein eS1 from Haloquadratum walsbyi (strain DSM 16790 / HBSQ001).